The chain runs to 563 residues: DNA polymerase III subunit tau (563 aa).

An ATP-binding site is contributed by 45–52; that stretch reads GPRGTGKT. Zn(2+) is bound by residues Cys-64, Cys-73, Cys-76, and Cys-79.

The protein belongs to the DnaX/STICHEL family. As to quaternary structure, component of the DNA clamp loading complex consisting of tau(3):delta(1):delta'(1). The DNA polymerase III holoenzyme complex contains at least 10 different subunits organized into 3 functionally essential subassemblies: the Pol III core, the beta sliding clamp processivity factor and the clamp-loading complex. The Pol III core (subunits alpha, epsilon and theta) contains the polymerase and the 3'-5' exonuclease proofreading activities. The polymerase is tethered to the template via the dimeric beta sliding clamp processivity factor. The DNA clamp-loading complex assembles the beta sliding clamp onto the primed template and plays a central role in the organization and communication at the replication fork. Forms a complex with replicative DNA helicase DnaB (shown with G.stearothermophilus DnaB) tau(3):DnaB(6); a single ATP hydrolysis even is sufficient for complex formation. Colocalizes with DNA helicases PriA, RecQ and RecS.

It is found in the cytoplasm. It localises to the nucleoid. It catalyses the reaction DNA(n) + a 2'-deoxyribonucleoside 5'-triphosphate = DNA(n+1) + diphosphate. In terms of biological role, part of the beta sliding clamp loading complex, which hydrolyzes ATP to load the beta clamp onto primed DNA to form the DNA replication pre-initiation complex. DNA polymerase III is a complex, multichain enzyme responsible for most of the replicative DNA synthesis in bacteria. This Bacillus subtilis (strain 168) protein is DNA polymerase III subunit tau.